The primary structure comprises 350 residues: Protein-glutamate methylesterase/protein-glutamine glutaminase (350 aa).

In terms of domain architecture, Response regulatory spans 5–122; sequence KVLCVDDSAL…RDGLIEYSEV (118 aa). At Asp-56 the chain carries 4-aspartylphosphate. In terms of domain architecture, CheB-type methylesterase spans 152–346; that stretch reads PFASSEKLVI…ERILTRLGDR (195 aa). Catalysis depends on residues Ser-165, His-191, and Asp-288.

The protein belongs to the CheB family. Phosphorylated by CheA. Phosphorylation of the N-terminal regulatory domain activates the methylesterase activity.

It localises to the cytoplasm. The enzyme catalyses [protein]-L-glutamate 5-O-methyl ester + H2O = L-glutamyl-[protein] + methanol + H(+). It catalyses the reaction L-glutaminyl-[protein] + H2O = L-glutamyl-[protein] + NH4(+). In terms of biological role, involved in chemotaxis. Part of a chemotaxis signal transduction system that modulates chemotaxis in response to various stimuli. Catalyzes the demethylation of specific methylglutamate residues introduced into the chemoreceptors (methyl-accepting chemotaxis proteins or MCP) by CheR. Also mediates the irreversible deamidation of specific glutamine residues to glutamic acid. The polypeptide is Protein-glutamate methylesterase/protein-glutamine glutaminase (Bordetella bronchiseptica (strain ATCC BAA-588 / NCTC 13252 / RB50) (Alcaligenes bronchisepticus)).